The chain runs to 155 residues: Endoribonuclease YbeY (155 aa).

Residues His-117, His-121, and His-127 each contribute to the Zn(2+) site.

The protein belongs to the endoribonuclease YbeY family. Zn(2+) serves as cofactor.

It is found in the cytoplasm. Its function is as follows. Single strand-specific metallo-endoribonuclease involved in late-stage 70S ribosome quality control and in maturation of the 3' terminus of the 16S rRNA. This is Endoribonuclease YbeY from Dichelobacter nodosus (strain VCS1703A).